We begin with the raw amino-acid sequence, 175 residues long: NADH-ubiquinone oxidoreductase chain 6 (175 aa).

Helical transmembrane passes span 1 to 21 (MMTYIVFILSIVFVMSFVGFA), 25 to 45 (SPIYGGLVLIISGGIGCAIVL), 47 to 67 (FGGSFLGLMVFLIYLGGMLVV), 88 to 108 (AVLAAFITGLLSELLTACYIL), and 149 to 169 (YGTWLVVVTGWSLLIGVLVIM).

The protein belongs to the complex I subunit 6 family. In terms of assembly, core subunit of respiratory chain NADH dehydrogenase (Complex I) which is composed of 45 different subunits.

Its subcellular location is the mitochondrion inner membrane. The catalysed reaction is a ubiquinone + NADH + 5 H(+)(in) = a ubiquinol + NAD(+) + 4 H(+)(out). Core subunit of the mitochondrial membrane respiratory chain NADH dehydrogenase (Complex I) which catalyzes electron transfer from NADH through the respiratory chain, using ubiquinone as an electron acceptor. Essential for the catalytic activity and assembly of complex I. This Canis lupus familiaris (Dog) protein is NADH-ubiquinone oxidoreductase chain 6 (MT-ND6).